The following is a 505-amino-acid chain: Deoxyguanosinetriphosphate triphosphohydrolase (505 aa).

The HD domain maps to 66–273 (RLTHSLEVQQ…MEAADDISYC (208 aa)).

It belongs to the dGTPase family. Type 1 subfamily. Homotetramer. The cofactor is Mg(2+).

The catalysed reaction is dGTP + H2O = 2'-deoxyguanosine + triphosphate + H(+). Functionally, dGTPase preferentially hydrolyzes dGTP over the other canonical NTPs. The sequence is that of Deoxyguanosinetriphosphate triphosphohydrolase from Escherichia fergusonii (strain ATCC 35469 / DSM 13698 / CCUG 18766 / IAM 14443 / JCM 21226 / LMG 7866 / NBRC 102419 / NCTC 12128 / CDC 0568-73).